The following is a 562-amino-acid chain: Arginine--tRNA ligase (562 aa).

Residues 121 to 131 carry the 'HIGH' region motif; it reads PNIAKPMGMGH.

Belongs to the class-I aminoacyl-tRNA synthetase family. In terms of assembly, monomer.

The protein resides in the cytoplasm. It catalyses the reaction tRNA(Arg) + L-arginine + ATP = L-arginyl-tRNA(Arg) + AMP + diphosphate. This chain is Arginine--tRNA ligase, found in Limosilactobacillus fermentum (strain NBRC 3956 / LMG 18251) (Lactobacillus fermentum).